The chain runs to 666 residues: DNA-directed RNA polymerase subunit beta' (666 aa).

The Zn(2+) site is built by C69, C71, C87, and C90. Mg(2+) contacts are provided by D489, D491, and D493.

The protein belongs to the RNA polymerase beta' chain family. RpoC1 subfamily. In terms of assembly, in plastids the minimal PEP RNA polymerase catalytic core is composed of four subunits: alpha, beta, beta', and beta''. When a (nuclear-encoded) sigma factor is associated with the core the holoenzyme is formed, which can initiate transcription. It depends on Mg(2+) as a cofactor. The cofactor is Zn(2+).

The protein localises to the plastid. It is found in the chloroplast. The enzyme catalyses RNA(n) + a ribonucleoside 5'-triphosphate = RNA(n+1) + diphosphate. Functionally, DNA-dependent RNA polymerase catalyzes the transcription of DNA into RNA using the four ribonucleoside triphosphates as substrates. The chain is DNA-directed RNA polymerase subunit beta' from Chara vulgaris (Common stonewort).